The sequence spans 411 residues: Gamma-glutamyl phosphate reductase (411 aa).

Belongs to the gamma-glutamyl phosphate reductase family.

The protein localises to the cytoplasm. The catalysed reaction is L-glutamate 5-semialdehyde + phosphate + NADP(+) = L-glutamyl 5-phosphate + NADPH + H(+). Its pathway is amino-acid biosynthesis; L-proline biosynthesis; L-glutamate 5-semialdehyde from L-glutamate: step 2/2. Functionally, catalyzes the NADPH-dependent reduction of L-glutamate 5-phosphate into L-glutamate 5-semialdehyde and phosphate. The product spontaneously undergoes cyclization to form 1-pyrroline-5-carboxylate. The sequence is that of Gamma-glutamyl phosphate reductase from Nautilia profundicola (strain ATCC BAA-1463 / DSM 18972 / AmH).